The chain runs to 285 residues: 4-diphosphocytidyl-2-C-methyl-D-erythritol kinase (285 aa).

Lys10 is an active-site residue. Residue 94 to 104 (PVAAGLGGGSS) coordinates ATP. Asp136 is a catalytic residue.

The protein belongs to the GHMP kinase family. IspE subfamily.

The catalysed reaction is 4-CDP-2-C-methyl-D-erythritol + ATP = 4-CDP-2-C-methyl-D-erythritol 2-phosphate + ADP + H(+). The protein operates within isoprenoid biosynthesis; isopentenyl diphosphate biosynthesis via DXP pathway; isopentenyl diphosphate from 1-deoxy-D-xylulose 5-phosphate: step 3/6. In terms of biological role, catalyzes the phosphorylation of the position 2 hydroxy group of 4-diphosphocytidyl-2C-methyl-D-erythritol. This Latilactobacillus sakei subsp. sakei (strain 23K) (Lactobacillus sakei subsp. sakei) protein is 4-diphosphocytidyl-2-C-methyl-D-erythritol kinase.